Consider the following 549-residue polypeptide: Probable glucomannan 4-beta-mannosyltransferase 4 (549 aa).

A helical membrane pass occupies residues 35–55 (VAPVLQFAVWACMAMSVMLVL). Asp151 is a catalytic residue. Substrate-binding residues include Asp210 and Asp212. The active site involves Asp304. A run of 4 helical transmembrane segments spans residues 383-403 (VVAP…SVMV), 406-426 (VSIP…MNAI), 497-517 (IYIP…YDLV), and 523-543 (YYLY…GFAG).

It belongs to the glycosyltransferase 2 family. Plant cellulose synthase-like A subfamily.

Its subcellular location is the golgi apparatus membrane. It catalyses the reaction GDP-mannose + (glucomannan)n = GDP + (glucomannan)n+1.. Probable mannan synthase which consists of a 4-beta-mannosyltransferase activity on mannan using GDP-mannose. The beta-1,4-mannan product is the backbone for galactomannan synthesis by galactomannan galactosyltransferase. Galactomannan is a noncellulosic polysaccharides of plant cell wall. In Oryza sativa subsp. japonica (Rice), this protein is Probable glucomannan 4-beta-mannosyltransferase 4.